The primary structure comprises 333 residues: Testin-2 (333 aa).

An N-terminal signal peptide occupies residues 1-17; that stretch reads MIAVLFLAILCLEIDST. Disulfide bonds link cysteine 135–cysteine 178, cysteine 169–cysteine 211, and cysteine 269–cysteine 322. N-linked (GlcNAc...) asparagine glycosylation is present at asparagine 173. Catalysis depends on residues histidine 276 and asparagine 300.

It belongs to the peptidase C1 family. Expressed in testis and ovary. Low level in spleen, epididymis, kidney, and uterus. Expressed in primary cultures of Sertoli cells.

It localises to the secreted. This is Testin-2 from Mus musculus (Mouse).